A 671-amino-acid polypeptide reads, in one-letter code: DNA ligase (671 aa).

Residues 32-36 (DAEYD), 81-82 (SL), and Glu113 contribute to the NAD(+) site. Catalysis depends on Lys115, which acts as the N6-AMP-lysine intermediate. Positions 136, 173, 290, and 314 each coordinate NAD(+). 4 residues coordinate Zn(2+): Cys408, Cys411, Cys426, and Cys432. The BRCT domain maps to 593–671 (EIDSPFAGKT…EAEMIRLLGA (79 aa)).

Belongs to the NAD-dependent DNA ligase family. LigA subfamily. Mg(2+) is required as a cofactor. It depends on Mn(2+) as a cofactor.

The catalysed reaction is NAD(+) + (deoxyribonucleotide)n-3'-hydroxyl + 5'-phospho-(deoxyribonucleotide)m = (deoxyribonucleotide)n+m + AMP + beta-nicotinamide D-nucleotide.. Functionally, DNA ligase that catalyzes the formation of phosphodiester linkages between 5'-phosphoryl and 3'-hydroxyl groups in double-stranded DNA using NAD as a coenzyme and as the energy source for the reaction. It is essential for DNA replication and repair of damaged DNA. This chain is DNA ligase, found in Salmonella typhimurium (strain LT2 / SGSC1412 / ATCC 700720).